Consider the following 250-residue polypeptide: Adenosylcobinamide-GDP ribazoletransferase (250 aa).

The next 6 membrane-spanning stretches (helical) occupy residues 32-52, 59-79, 113-133, 136-156, 185-205, and 230-250; these read KGII…MVAY, LAHS…TGGL, GVLA…GLGE, IYWG…YGCY, LTFI…LLPI, and CELT…AGLF.

This sequence belongs to the CobS family. Mg(2+) serves as cofactor.

It is found in the cell membrane. It catalyses the reaction alpha-ribazole + adenosylcob(III)inamide-GDP = adenosylcob(III)alamin + GMP + H(+). The catalysed reaction is alpha-ribazole 5'-phosphate + adenosylcob(III)inamide-GDP = adenosylcob(III)alamin 5'-phosphate + GMP + H(+). It functions in the pathway cofactor biosynthesis; adenosylcobalamin biosynthesis; adenosylcobalamin from cob(II)yrinate a,c-diamide: step 7/7. Joins adenosylcobinamide-GDP and alpha-ribazole to generate adenosylcobalamin (Ado-cobalamin). Also synthesizes adenosylcobalamin 5'-phosphate from adenosylcobinamide-GDP and alpha-ribazole 5'-phosphate. This is Adenosylcobinamide-GDP ribazoletransferase from Alkaliphilus metalliredigens (strain QYMF).